The following is a 566-amino-acid chain: MOB kinase activator-like 2 (566 aa).

Disordered stretches follow at residues 28–57 and 74–118; these read ADAT…SSLS and GRAV…GAQA. A compositionally biased stretch (low complexity) spans 35–57; that stretch reads SSTAPQTPTASTPRPSSSHSSLS. Over residues 85-115 the composition is skewed to gly residues; it reads QNGGKGNASGAGGGAGGGGAGGASGGTGGTG. Zn(2+) contacts are provided by C209, C214, H289, and H294. Disordered stretches follow at residues 346-407 and 498-541; these read GGCQ…SASA and FSNN…QCNA. The span at 367–388 shows a compositional bias: low complexity; the sequence is LQHQSLQQQQQHHNSSSNSTSS. Residues 394 to 407 are compositionally biased toward polar residues; the sequence is VNSQSNNGSTSASA. Low complexity predominate over residues 498–507; sequence FSNNNNNNHN. The span at 508–526 shows a compositional bias: basic residues; the sequence is LNHHHHHHHHHGHHGHHHA.

This sequence belongs to the MOB1/phocein family. In terms of assembly, interacts with and activates trc, also interacts with wts.

It is found in the cytoplasm. The protein localises to the nucleus. Its function is as follows. Required for the normal morphogenesis of a variety of polarized outgrowths including epidermal hairs, bristles, arista laterals, and dendrites. The protein is MOB kinase activator-like 2 (Mob2) of Drosophila melanogaster (Fruit fly).